Reading from the N-terminus, the 502-residue chain is MTEKKYIVALDQGTTSSRAVVMDHDANIVSVSQREFEQIYPKPGWVEHDPMEIWASQSSTLVEVLAKADISSDQIAAIGITNQRETAIVWERETGKPIYNAIVWQCRRTADICEQLKRDGLEDYIRDNTGLVVDPYFSGTKVKWILDHVEGSRERAKRGELLFGTVDTWLIWKMTQGRVHVTDYTNASRTMLFNIHDLDWDDKMLDVLDIPRAMLPQVRKSSEVYGQTNIGGKGGTRIPIAGIAGDQQAALFGQLCVKEGMAKNTYGTGCFMLMNTGEKAVKSENGLLTTIACGPSGEVNYALEGAVFMAGASIQWLRDEMKLISDAFDSEYFATKVKDTNGVYVVPAFTGLGAPYWDPYARGAIFGLTRGVNSNHIIRATLESIAYQTRDVLEAMQADSGIRLHALRVDGGAVANNFLMQFQSDILGTRVERPEVREVTALGAAYLAGLAVGYWQNLDELQEKAVIEREFRPGIETTERNYRYSGWKKAVKRAMAWEDHDK.

Threonine 14 contributes to the ADP binding site. ATP-binding residues include threonine 14, threonine 15, and serine 16. A sn-glycerol 3-phosphate-binding site is contributed by threonine 14. Arginine 18 is a binding site for ADP. 4 residues coordinate sn-glycerol 3-phosphate: arginine 84, glutamate 85, tyrosine 136, and aspartate 246. The glycerol site is built by arginine 84, glutamate 85, tyrosine 136, aspartate 246, and glutamine 247. Residues threonine 268 and glycine 311 each coordinate ADP. Threonine 268, glycine 311, glutamine 315, and glycine 412 together coordinate ATP. ADP is bound by residues glycine 412 and asparagine 416.

Belongs to the FGGY kinase family. As to quaternary structure, homotetramer and homodimer (in equilibrium). Heterodimer with EIIA-Glc. Binds 1 zinc ion per glycerol kinase EIIA-Glc dimer. The zinc ion is important for dimerization.

It catalyses the reaction glycerol + ATP = sn-glycerol 3-phosphate + ADP + H(+). It participates in polyol metabolism; glycerol degradation via glycerol kinase pathway; sn-glycerol 3-phosphate from glycerol: step 1/1. Its activity is regulated as follows. Activity of this regulatory enzyme is affected by several metabolites. Allosterically and non-competitively inhibited by fructose 1,6-bisphosphate (FBP) and unphosphorylated phosphocarrier protein EIIA-Glc (III-Glc), an integral component of the bacterial phosphotransferase (PTS) system. Key enzyme in the regulation of glycerol uptake and metabolism. Catalyzes the phosphorylation of glycerol to yield sn-glycerol 3-phosphate. The polypeptide is Glycerol kinase (Salmonella agona (strain SL483)).